Reading from the N-terminus, the 550-residue chain is Chaperonin GroEL (550 aa).

Residues 30–33 (TLGP), K51, 87–91 (DGTTT), G416, 480–482 (NVA), and D496 contribute to the ATP site. Positions 525-550 (LPKKDDEGGGGDMGGMGGMGGMGGMM) are disordered. A compositionally biased stretch (gly residues) spans 534-550 (GGDMGGMGGMGGMGGMM).

The protein belongs to the chaperonin (HSP60) family. As to quaternary structure, forms a cylinder of 14 subunits composed of two heptameric rings stacked back-to-back. Interacts with the co-chaperonin GroES.

It localises to the cytoplasm. The catalysed reaction is ATP + H2O + a folded polypeptide = ADP + phosphate + an unfolded polypeptide.. Its function is as follows. Together with its co-chaperonin GroES, plays an essential role in assisting protein folding. The GroEL-GroES system forms a nano-cage that allows encapsulation of the non-native substrate proteins and provides a physical environment optimized to promote and accelerate protein folding. The protein is Chaperonin GroEL of Halorhodospira halophila (strain DSM 244 / SL1) (Ectothiorhodospira halophila (strain DSM 244 / SL1)).